A 783-amino-acid chain; its full sequence is Protein involved in starch initiation 1 (783 aa).

Residues 1–27 constitute a chloroplast transit peptide; that stretch reads MGFSQAIRLNLASFSSPSPCDYCLTRV. Coiled-coil stretches lie at residues 128-309, 345-432, and 457-512; these read LHDA…LKEE, LVFS…LELA, and LQEK…LKAL.

Interacts with PTST2; the interaction is essential for the initiation of starch granules biosynthesis in leaf chloroplasts. Interacts with SS4; the interaction is essential for the initiation of starch granules biosynthesis in leaf chloroplasts.

It is found in the plastid. The protein resides in the chloroplast. Functionally, required for the initiation of starch granules biosynthesis in leaf chloroplasts. Involved in determining starch granule number and size in chloroplasts. The protein is Protein involved in starch initiation 1 of Arabidopsis thaliana (Mouse-ear cress).